Reading from the N-terminus, the 510-residue chain is Protein disulfide-isomerase (510 aa).

The N-terminal stretch at 1–19 is a signal peptide; it reads MLRRALLCLAVAAAPGLYA. The Thioredoxin 1 domain occupies 20–136; sequence DAPEEEDHVL…IVNWLKKRTG (117 aa). Catalysis depends on nucleophile residues C55 and C58. A disulfide bridge links C55 with C58. Residue K202 is modified to N6-acetyllysine. K224 and K273 each carry N6-succinyllysine. S333 and S359 each carry phosphoserine. One can recognise a Thioredoxin 2 domain in the interval 351–477; it reads GKIKPHLMSQ…FKKFLESGGQ (127 aa). Residues C399 and C402 each act as nucleophile in the active site. C399 and C402 are joined by a disulfide. S429 carries the phosphoserine modification. The tract at residues 473–510 is disordered; it reads ESGGQDGAGDDDDLEDLEEAEEPDMEEDDDQKAVKDEL. Residues 480–502 show a composition bias toward acidic residues; sequence AGDDDDLEDLEEAEEPDMEEDDD. The short motif at 507–510 is the Prevents secretion from ER element; the sequence is KDEL.

Belongs to the protein disulfide isomerase family. In terms of assembly, heterodimer; heterodimerizes with the protein microsomal triglyceride transfer MTTP. Homodimer. Homodimer. Monomers and homotetramers may also occur. Interacts with P4HA2, forming a heterotetramer consisting of 2 alpha subunits (P4HA2) and 2 beta (P4HB), where P4HB plays the role of a structural subunit; this tetramer catalyzes the formation of 4-hydroxyproline in collagen. Also constitutes the structural subunit of the microsomal triacylglycerol transfer protein MTTP in mammalian cells. Stabilizes both enzymes and retain them in the ER without contributing to the catalytic activity. Binds UBQLN1. Interacts with ERO1B. Interacts with ILDR2. Interacts with ERN1/IRE1A (via N-terminus); the interaction is enhanced by phosphorylation of P4HB by FAM20C in response to endoplasmic reticulum stress and results in attenuation of ERN1 activity. Post-translationally, phosphorylation of Ser-359 by FAM20C is induced by endoplasmic reticulum stress and results in a functional switch from oxidoreductase to molecular chaperone. It also promotes interaction with ERN1.

It localises to the endoplasmic reticulum. The protein resides in the endoplasmic reticulum lumen. Its subcellular location is the melanosome. It is found in the cell membrane. It catalyses the reaction Catalyzes the rearrangement of -S-S- bonds in proteins.. In terms of biological role, this multifunctional protein catalyzes the formation, breakage and rearrangement of disulfide bonds. At the cell surface, seems to act as a reductase that cleaves disulfide bonds of proteins attached to the cell. May therefore cause structural modifications of exofacial proteins. Inside the cell, seems to form/rearrange disulfide bonds of nascent proteins. At high concentrations and following phosphorylation by FAM20C, functions as a chaperone that inhibits aggregation of misfolded proteins. At low concentrations, facilitates aggregation (anti-chaperone activity). May be involved with other chaperones in the structural modification of the TG precursor in hormone biogenesis. Also acts as a structural subunit of various enzymes such as prolyl 4-hydroxylase and microsomal triacylglycerol transfer protein MTTP. Receptor for LGALS9; the interaction retains P4HB at the cell surface of Th2 T helper cells, increasing disulfide reductase activity at the plasma membrane, altering the plasma membrane redox state and enhancing cell migration. This Macaca fuscata fuscata (Japanese macaque) protein is Protein disulfide-isomerase (P4HB).